Consider the following 275-residue polypeptide: Nitrogenase iron protein 3 (275 aa).

9–16 (GKGGIGKS) contributes to the ATP binding site. Residue Cys97 coordinates [4Fe-4S] cluster. The residue at position 100 (Arg100) is an ADP-ribosylarginine; by dinitrogenase reductase ADP-ribosyltransferase. Cys132 contributes to the [4Fe-4S] cluster binding site.

The protein belongs to the NifH/BchL/ChlL family. In terms of assembly, homodimer. [4Fe-4S] cluster serves as cofactor. The reversible ADP-ribosylation of Arg-100 inactivates the nitrogenase reductase and regulates nitrogenase activity.

It carries out the reaction N2 + 8 reduced [2Fe-2S]-[ferredoxin] + 16 ATP + 16 H2O = H2 + 8 oxidized [2Fe-2S]-[ferredoxin] + 2 NH4(+) + 16 ADP + 16 phosphate + 6 H(+). In terms of biological role, the key enzymatic reactions in nitrogen fixation are catalyzed by the nitrogenase complex, which has 2 components: the iron protein and the molybdenum-iron protein. The polypeptide is Nitrogenase iron protein 3 (nifH3) (Clostridium pasteurianum).